A 964-amino-acid polypeptide reads, in one-letter code: Glycine dehydrogenase (decarboxylating) (964 aa).

An N6-(pyridoxal phosphate)lysine modification is found at lysine 710.

The protein belongs to the GcvP family. The glycine cleavage system is composed of four proteins: P, T, L and H. Pyridoxal 5'-phosphate is required as a cofactor.

The catalysed reaction is N(6)-[(R)-lipoyl]-L-lysyl-[glycine-cleavage complex H protein] + glycine + H(+) = N(6)-[(R)-S(8)-aminomethyldihydrolipoyl]-L-lysyl-[glycine-cleavage complex H protein] + CO2. Its function is as follows. The glycine cleavage system catalyzes the degradation of glycine. The P protein binds the alpha-amino group of glycine through its pyridoxal phosphate cofactor; CO(2) is released and the remaining methylamine moiety is then transferred to the lipoamide cofactor of the H protein. The protein is Glycine dehydrogenase (decarboxylating) of Saccharophagus degradans (strain 2-40 / ATCC 43961 / DSM 17024).